Consider the following 353-residue polypeptide: UDP-3-O-acylglucosamine N-acyltransferase (353 aa).

Residue His-246 is the Proton acceptor of the active site.

Belongs to the transferase hexapeptide repeat family. LpxD subfamily. Homotrimer.

The catalysed reaction is a UDP-3-O-[(3R)-3-hydroxyacyl]-alpha-D-glucosamine + a (3R)-hydroxyacyl-[ACP] = a UDP-2-N,3-O-bis[(3R)-3-hydroxyacyl]-alpha-D-glucosamine + holo-[ACP] + H(+). Its pathway is bacterial outer membrane biogenesis; LPS lipid A biosynthesis. In terms of biological role, catalyzes the N-acylation of UDP-3-O-acylglucosamine using 3-hydroxyacyl-ACP as the acyl donor. Is involved in the biosynthesis of lipid A, a phosphorylated glycolipid that anchors the lipopolysaccharide to the outer membrane of the cell. The chain is UDP-3-O-acylglucosamine N-acyltransferase from Chlorobaculum tepidum (strain ATCC 49652 / DSM 12025 / NBRC 103806 / TLS) (Chlorobium tepidum).